We begin with the raw amino-acid sequence, 366 residues long: Chorismate synthase (366 aa).

Residues arginine 48 and arginine 54 each contribute to the NADP(+) site. FMN-binding positions include 125–127, 238–239, glycine 278, 293–297, and arginine 319; these read RSS, NA, and KPTSS.

This sequence belongs to the chorismate synthase family. In terms of assembly, homotetramer. It depends on FMNH2 as a cofactor.

The enzyme catalyses 5-O-(1-carboxyvinyl)-3-phosphoshikimate = chorismate + phosphate. It functions in the pathway metabolic intermediate biosynthesis; chorismate biosynthesis; chorismate from D-erythrose 4-phosphate and phosphoenolpyruvate: step 7/7. Catalyzes the anti-1,4-elimination of the C-3 phosphate and the C-6 proR hydrogen from 5-enolpyruvylshikimate-3-phosphate (EPSP) to yield chorismate, which is the branch point compound that serves as the starting substrate for the three terminal pathways of aromatic amino acid biosynthesis. This reaction introduces a second double bond into the aromatic ring system. This Paraburkholderia phymatum (strain DSM 17167 / CIP 108236 / LMG 21445 / STM815) (Burkholderia phymatum) protein is Chorismate synthase.